Consider the following 371-residue polypeptide: S-adenosylmethionine:tRNA ribosyltransferase-isomerase (371 aa).

This sequence belongs to the QueA family. As to quaternary structure, monomer.

It is found in the cytoplasm. It catalyses the reaction 7-aminomethyl-7-carbaguanosine(34) in tRNA + S-adenosyl-L-methionine = epoxyqueuosine(34) in tRNA + adenine + L-methionine + 2 H(+). Its pathway is tRNA modification; tRNA-queuosine biosynthesis. In terms of biological role, transfers and isomerizes the ribose moiety from AdoMet to the 7-aminomethyl group of 7-deazaguanine (preQ1-tRNA) to give epoxyqueuosine (oQ-tRNA). The chain is S-adenosylmethionine:tRNA ribosyltransferase-isomerase from Prochlorococcus marinus (strain MIT 9303).